A 314-amino-acid polypeptide reads, in one-letter code: Putative peptide transport system permease protein BRA1092/BS1330_II1084 (314 aa).

6 consecutive transmembrane segments (helical) span residues 12–32 (AIPVMLIVAILTFLLMKLLPG), 101–121 (LALLAFAITIPVGIIMGVVAA), 135–155 (LALLGVSVPSFWLAILAVILF), 177–197 (WLRSLILPASILALFQIGYLA), 237–257 (VSVLTVSGYIFSLLIGGSVVI), and 286–306 (MLFLGFLFVAINVLVDILYTI). The region spanning 95-304 (LPVTISLALL…AINVLVDILY (210 aa)) is the ABC transmembrane type-1 domain.

The protein belongs to the binding-protein-dependent transport system permease family. In terms of assembly, the complex is composed of two ATP-binding proteins (BRA1094), two transmembrane proteins (BRA1092 and BRA1093) and a solute-binding protein (BRA1090).

It is found in the cell inner membrane. In terms of biological role, probably part of an ABC transporter complex that could be involved in peptide import. Probably responsible for the translocation of the substrate across the membrane. The protein is Putative peptide transport system permease protein BRA1092/BS1330_II1084 of Brucella suis biovar 1 (strain 1330).